The chain runs to 507 residues: Tabersonine/lochnericine 19-hydroxylase (507 aa).

A helical transmembrane segment spans residues 8-28 (FFVLLLPFFIGIAFIYKLWNF). N-linked (GlcNAc...) asparagine glycosylation is present at Asn-167. Position 447 (Cys-447) interacts with heme.

Belongs to the cytochrome P450 family. Requires heme as cofactor. In terms of tissue distribution, confined to roots.

Its subcellular location is the endoplasmic reticulum membrane. It carries out the reaction (-)-tabersonine + reduced [NADPH--hemoprotein reductase] + O2 = (-)-(R)-19-hydroxytabersonine + oxidized [NADPH--hemoprotein reductase] + H2O + H(+). It catalyses the reaction lochnericine + reduced [NADPH--hemoprotein reductase] + O2 = horhammericine + oxidized [NADPH--hemoprotein reductase] + H2O + H(+). The enzyme catalyses (-)-vincadifformine + reduced [NADPH--hemoprotein reductase] + O2 = (-)-minovincinine + oxidized [NADPH--hemoprotein reductase] + H2O + H(+). The protein operates within alkaloid biosynthesis. Component of the monoterpenoid indole alkaloids (MIAs, e.g. echitovenine, tabersonine, lochnericine, 19-hydroxytabersonine and horhammericine) biosynthetic pathway; MIAs are used in cancer treatment and other medical applications. Cytochrome P450 catalyzing the conversion of (-)-tabersonine to 19-hydroxytabersonine, of lochnericine to horhammericine and of (-)-vincadifformine to (-)-minovincinine. The chain is Tabersonine/lochnericine 19-hydroxylase from Catharanthus roseus (Madagascar periwinkle).